A 172-amino-acid chain; its full sequence is Shikimate kinase (172 aa).

Residue 11–16 (ASGKTE) coordinates ATP. Residue threonine 15 participates in Mg(2+) binding. Substrate is bound by residues aspartate 33, arginine 57, and glycine 80. Arginine 120 contacts ATP. Position 142 (arginine 142) interacts with substrate.

The protein belongs to the shikimate kinase family. Monomer. It depends on Mg(2+) as a cofactor.

The protein resides in the cytoplasm. The catalysed reaction is shikimate + ATP = 3-phosphoshikimate + ADP + H(+). Its pathway is metabolic intermediate biosynthesis; chorismate biosynthesis; chorismate from D-erythrose 4-phosphate and phosphoenolpyruvate: step 5/7. Its function is as follows. Catalyzes the specific phosphorylation of the 3-hydroxyl group of shikimic acid using ATP as a cosubstrate. The polypeptide is Shikimate kinase (Flavobacterium psychrophilum (strain ATCC 49511 / DSM 21280 / CIP 103535 / JIP02/86)).